Consider the following 255-residue polypeptide: PABIR family member 2 (255 aa).

The segment at 1 to 24 (MAQEKMDLDFEADTSEGATLRRSN) is disordered. At alanine 2 the chain carries N-acetylalanine. 4 positions are modified to phosphoserine: serine 25, serine 33, serine 50, and serine 58. The residue at position 112 (threonine 112) is a Phosphothreonine. Serine 115 and serine 119 each carry phosphoserine. Arginine 122 is subject to Omega-N-methylarginine. Serine 145 carries the phosphoserine modification. Disordered stretches follow at residues 169–196 (LGPL…SMLS) and 219–238 (SGLS…SPVA). Over residues 174–184 (RKGEMEMESQP) the composition is skewed to basic and acidic residues.

The protein belongs to the FAM122 family.

The polypeptide is PABIR family member 2 (Mus musculus (Mouse)).